The following is a 151-amino-acid chain: uncharacterized protein (151 aa).

This is an uncharacterized protein from Rhodobacter capsulatus (Rhodopseudomonas capsulata).